Reading from the N-terminus, the 152-residue chain is Transcription elongation factor Spt5 (152 aa).

The region spanning 94 to 124 (PGDLVEVIAGPFKGQKAKVVKIDESKDEVVV) is the KOW domain.

Belongs to the archaeal Spt5 family. In terms of assembly, heterodimer composed of Spt4 and Spt5. Interacts with RNA polymerase (RNAP) independently of nucleic acids. Forms a homodimer in solution.

Functionally, stimulates transcription elongation. This Pyrococcus furiosus (strain ATCC 43587 / DSM 3638 / JCM 8422 / Vc1) protein is Transcription elongation factor Spt5.